We begin with the raw amino-acid sequence, 150 residues long: Regulatory protein RecX (150 aa).

The protein belongs to the RecX family.

The protein resides in the cytoplasm. Its function is as follows. Modulates RecA activity. The protein is Regulatory protein RecX of Acidithiobacillus ferrooxidans (strain ATCC 23270 / DSM 14882 / CIP 104768 / NCIMB 8455) (Ferrobacillus ferrooxidans (strain ATCC 23270)).